The chain runs to 364 residues: Putative acetyl-CoA C-acetyltransferase YhfS (364 aa).

C82 (acyl-thioester intermediate) is an active-site residue. H318 functions as the Proton acceptor in the catalytic mechanism.

The protein belongs to the thiolase-like superfamily. Thiolase family.

In terms of biological role, may be involved in fatty acid metabolism. This Bacillus subtilis (strain 168) protein is Putative acetyl-CoA C-acetyltransferase YhfS (yhfS).